Reading from the N-terminus, the 374-residue chain is Tomoregulin-2 (374 aa).

The first 39 residues, 1 to 39, serve as a signal peptide directing secretion; it reads MVLWESPRQCSSWTLCEGFCWLLLLPVMLLIVARPVKLA. The Extracellular segment spans residues 40 to 320; that stretch reads AFPTSLSDCQ…VPGPVRFQYV (281 aa). N55 carries an N-linked (GlcNAc...) asparagine glycan. Kazal-like domains follow at residues 90–137 and 181–229; these read VCQF…SCAT and VCNI…RCQD. Cystine bridges form between C91–C121, C95–C114, C103–C135, C182–C213, C186–C206, C195–C227, C265–C278, C273–C289, and C291–C300. An EGF-like domain is found at 261–301; sequence HHIPCPEHYNGFCMHGKCEHSINMQEPSCRCDAGYTGQHCE. The tract at residues 303-320 is required for shedding; it reads KDYSVLYVVPGPVRFQYV. The helical transmembrane segment at 321 to 341 threads the bilayer; the sequence is LIAAVIGTIQIAVICVVVLCI. Residues 342–374 lie on the Cytoplasmic side of the membrane; that stretch reads TRKCPRSNRIHRQKQNTGHYSSDNTTRASTRLI. The interval 353 to 374 is disordered; sequence RQKQNTGHYSSDNTTRASTRLI. The span at 356 to 374 shows a compositional bias: polar residues; sequence QNTGHYSSDNTTRASTRLI.

Belongs to the tomoregulin family. Post-translationally, O-glycosylated; contains chondroitin sulfate glycosaminoglycans. A soluble form (TMEFF2-ECD) is produced by proteolytic shedding. This shedding can be induced by phorbol ester or pro-inflammatory cytokines such as TNFalpha, and is mediated by a metalloproteinase ADAM.

The protein localises to the membrane. In terms of biological role, may be a survival factor for hippocampal and mesencephalic neurons. The shedded form may up-regulate cell proliferation. In Bos taurus (Bovine), this protein is Tomoregulin-2 (TMEFF2).